The following is a 322-amino-acid chain: N-acetyl-gamma-glutamyl-phosphate reductase (322 aa).

Residue Cys117 is part of the active site.

This sequence belongs to the NAGSA dehydrogenase family. Type 2 subfamily.

Its subcellular location is the cytoplasm. It carries out the reaction N-acetyl-L-glutamate 5-semialdehyde + phosphate + NADP(+) = N-acetyl-L-glutamyl 5-phosphate + NADPH + H(+). Its pathway is amino-acid biosynthesis; L-arginine biosynthesis; N(2)-acetyl-L-ornithine from L-glutamate: step 3/4. Functionally, catalyzes the NADPH-dependent reduction of N-acetyl-5-glutamyl phosphate to yield N-acetyl-L-glutamate 5-semialdehyde. The protein is N-acetyl-gamma-glutamyl-phosphate reductase of Trichormus variabilis (strain ATCC 29413 / PCC 7937) (Anabaena variabilis).